The following is a 67-amino-acid chain: Protein AaeX (67 aa).

A run of 2 helical transmembrane segments spans residues 10-30 (FGLS…LFFV) and 43-63 (FVWH…YLLF).

The protein belongs to the AaeX family.

The protein localises to the cell membrane. The polypeptide is Protein AaeX (Pectobacterium atrosepticum (strain SCRI 1043 / ATCC BAA-672) (Erwinia carotovora subsp. atroseptica)).